Here is a 231-residue protein sequence, read N- to C-terminus: Ribonuclease HII (231 aa).

Residues 38–227 enclose the RNase H type-2 domain; that stretch reads ELVAGGDEAG…IKSFYGQLKL (190 aa). The a divalent metal cation site is built by Asp44, Glu45, and Asp136.

The protein belongs to the RNase HII family. Requires Mn(2+) as cofactor. It depends on Mg(2+) as a cofactor.

Its subcellular location is the cytoplasm. It carries out the reaction Endonucleolytic cleavage to 5'-phosphomonoester.. Endonuclease that specifically degrades the RNA of RNA-DNA hybrids. This chain is Ribonuclease HII, found in Carboxydothermus hydrogenoformans (strain ATCC BAA-161 / DSM 6008 / Z-2901).